Consider the following 350-residue polypeptide: Ferredoxin--NADP reductase (350 aa).

FAD contacts are provided by Asp49, Gln57, Tyr62, Val102, Phe136, Asp303, and Thr344.

This sequence belongs to the ferredoxin--NADP reductase type 2 family. As to quaternary structure, homodimer. It depends on FAD as a cofactor.

It carries out the reaction 2 reduced [2Fe-2S]-[ferredoxin] + NADP(+) + H(+) = 2 oxidized [2Fe-2S]-[ferredoxin] + NADPH. The chain is Ferredoxin--NADP reductase from Granulibacter bethesdensis (strain ATCC BAA-1260 / CGDNIH1).